Reading from the N-terminus, the 235-residue chain is MINKTKRLMVSRQVKIPRKTYFWGPTPNPGMHPKDQSVTLLSIIRDYLKLSDKEREAARILANGLVKVDGKTVREKKFAVGFMDVIEINGESYRVVYNDQGALVLMKETKERASMKLLKVRSKVIAPGNRIQLGTHDGRTFITDDKSKKVGDVWAVSVPDMKISEIIKMQPGNKAYITAGSHVNQTGTISKIEAKEGSSANLVHFQEGFSTIKDHVFMIGSSKFSFVLSPEEVIP.

The S4 RNA-binding domain occupies 38-99; sequence VTLLSIIRDY…GESYRVVYND (62 aa).

This sequence belongs to the eukaryotic ribosomal protein eS4 family.

This is Small ribosomal subunit protein eS4 (rps4e) from Thermoplasma acidophilum (strain ATCC 25905 / DSM 1728 / JCM 9062 / NBRC 15155 / AMRC-C165).